The following is a 75-amino-acid chain: Large ribosomal subunit protein bL31 (75 aa).

It belongs to the bacterial ribosomal protein bL31 family. Type A subfamily. In terms of assembly, part of the 50S ribosomal subunit.

Binds the 23S rRNA. The protein is Large ribosomal subunit protein bL31 of Sphingopyxis alaskensis (strain DSM 13593 / LMG 18877 / RB2256) (Sphingomonas alaskensis).